An 877-amino-acid chain; its full sequence is Alanine--tRNA ligase (877 aa).

Residues histidine 561, histidine 565, cysteine 669, and histidine 673 each coordinate Zn(2+).

This sequence belongs to the class-II aminoacyl-tRNA synthetase family. Requires Zn(2+) as cofactor.

It is found in the cytoplasm. The catalysed reaction is tRNA(Ala) + L-alanine + ATP = L-alanyl-tRNA(Ala) + AMP + diphosphate. Functionally, catalyzes the attachment of alanine to tRNA(Ala) in a two-step reaction: alanine is first activated by ATP to form Ala-AMP and then transferred to the acceptor end of tRNA(Ala). Also edits incorrectly charged Ser-tRNA(Ala) and Gly-tRNA(Ala) via its editing domain. The polypeptide is Alanine--tRNA ligase (Endomicrobium trichonymphae).